The sequence spans 494 residues: Sulfate adenylyltransferase subunit 1 (494 aa).

One can recognise a tr-type G domain in the interval threonine 24–glutamine 240. A G1 region spans residues glycine 33–serine 40. Glycine 33–serine 40 lines the GTP pocket. Residues glycine 91–aspartate 95 are G2. Positions aspartate 112–glycine 115 are G3. Residues aspartate 112 to histidine 116 and asparagine 167 to aspartate 170 each bind GTP. The interval asparagine 167–aspartate 170 is G4. A G5 region spans residues serine 204–leucine 206.

This sequence belongs to the TRAFAC class translation factor GTPase superfamily. Classic translation factor GTPase family. CysN/NodQ subfamily. Heterodimer composed of CysD, the smaller subunit, and CysN.

The catalysed reaction is sulfate + ATP + H(+) = adenosine 5'-phosphosulfate + diphosphate. Its pathway is sulfur metabolism; hydrogen sulfide biosynthesis; sulfite from sulfate: step 1/3. In terms of biological role, with CysD forms the ATP sulfurylase (ATPS) that catalyzes the adenylation of sulfate producing adenosine 5'-phosphosulfate (APS) and diphosphate, the first enzymatic step in sulfur assimilation pathway. APS synthesis involves the formation of a high-energy phosphoric-sulfuric acid anhydride bond driven by GTP hydrolysis by CysN coupled to ATP hydrolysis by CysD. The polypeptide is Sulfate adenylyltransferase subunit 1 (Rhizobium rhizogenes (strain K84 / ATCC BAA-868) (Agrobacterium radiobacter)).